A 405-amino-acid chain; its full sequence is 4-hydroxy-3-methylbut-2-en-1-yl diphosphate synthase (ferredoxin) (405 aa).

[4Fe-4S] cluster contacts are provided by C314, C317, C348, and E355.

The protein belongs to the IspG family. The cofactor is [4Fe-4S] cluster.

It carries out the reaction (2E)-4-hydroxy-3-methylbut-2-enyl diphosphate + 2 oxidized [2Fe-2S]-[ferredoxin] + H2O = 2-C-methyl-D-erythritol 2,4-cyclic diphosphate + 2 reduced [2Fe-2S]-[ferredoxin] + H(+). The protein operates within isoprenoid biosynthesis; isopentenyl diphosphate biosynthesis via DXP pathway; isopentenyl diphosphate from 1-deoxy-D-xylulose 5-phosphate: step 5/6. Its function is as follows. Converts 2C-methyl-D-erythritol 2,4-cyclodiphosphate (ME-2,4cPP) into 1-hydroxy-2-methyl-2-(E)-butenyl 4-diphosphate. The sequence is that of 4-hydroxy-3-methylbut-2-en-1-yl diphosphate synthase (ferredoxin) from Prochlorococcus marinus subsp. pastoris (strain CCMP1986 / NIES-2087 / MED4).